We begin with the raw amino-acid sequence, 301 residues long: Acetaldehyde dehydrogenase (301 aa).

Cys130 (acyl-thioester intermediate) is an active-site residue. Residues Ser161 to Asn169 and Asn272 each bind NAD(+).

It belongs to the acetaldehyde dehydrogenase family.

It catalyses the reaction acetaldehyde + NAD(+) + CoA = acetyl-CoA + NADH + H(+). The chain is Acetaldehyde dehydrogenase (mhpF) from Cupriavidus taiwanensis (strain DSM 17343 / BCRC 17206 / CCUG 44338 / CIP 107171 / LMG 19424 / R1) (Ralstonia taiwanensis (strain LMG 19424)).